Reading from the N-terminus, the 331-residue chain is Glycerol-3-phosphate dehydrogenase [NAD(P)+] (331 aa).

The NADPH site is built by Trp13, Arg33, and Lys103. Sn-glycerol 3-phosphate is bound by residues Lys103, Gly131, and Thr133. NADPH is bound at residue Ala135. Sn-glycerol 3-phosphate is bound by residues Lys187, Asp240, Ser250, Arg251, and Asn252. Residue Lys187 is the Proton acceptor of the active site. NADPH is bound at residue Arg251. Positions 275 and 277 each coordinate NADPH.

This sequence belongs to the NAD-dependent glycerol-3-phosphate dehydrogenase family.

It is found in the cytoplasm. The catalysed reaction is sn-glycerol 3-phosphate + NAD(+) = dihydroxyacetone phosphate + NADH + H(+). It catalyses the reaction sn-glycerol 3-phosphate + NADP(+) = dihydroxyacetone phosphate + NADPH + H(+). The protein operates within membrane lipid metabolism; glycerophospholipid metabolism. In terms of biological role, catalyzes the reduction of the glycolytic intermediate dihydroxyacetone phosphate (DHAP) to sn-glycerol 3-phosphate (G3P), the key precursor for phospholipid synthesis. This is Glycerol-3-phosphate dehydrogenase [NAD(P)+] from Novosphingobium aromaticivorans (strain ATCC 700278 / DSM 12444 / CCUG 56034 / CIP 105152 / NBRC 16084 / F199).